We begin with the raw amino-acid sequence, 275 residues long: Tryptophan synthase alpha chain (275 aa).

Residues Glu-51 and Asp-62 each act as proton acceptor in the active site.

This sequence belongs to the TrpA family. As to quaternary structure, tetramer of two alpha and two beta chains.

The enzyme catalyses (1S,2R)-1-C-(indol-3-yl)glycerol 3-phosphate + L-serine = D-glyceraldehyde 3-phosphate + L-tryptophan + H2O. The protein operates within amino-acid biosynthesis; L-tryptophan biosynthesis; L-tryptophan from chorismate: step 5/5. Its function is as follows. The alpha subunit is responsible for the aldol cleavage of indoleglycerol phosphate to indole and glyceraldehyde 3-phosphate. The sequence is that of Tryptophan synthase alpha chain from Methanopyrus kandleri (strain AV19 / DSM 6324 / JCM 9639 / NBRC 100938).